An 89-amino-acid chain; its full sequence is UPF0335 protein CCNA_03428 (89 aa).

Belongs to the UPF0335 family.

This chain is UPF0335 protein CCNA_03428, found in Caulobacter vibrioides (strain NA1000 / CB15N) (Caulobacter crescentus).